The following is a 261-amino-acid chain: uncharacterized protein (261 aa).

Transmembrane regions (helical) follow at residues Trp15–Cys35, Val87–Ala107, and Leu131–Ile151. The span at Leu234–Glu246 shows a compositional bias: basic and acidic residues. Residues Leu234–Gln261 form a disordered region.

Its subcellular location is the membrane. This is an uncharacterized protein from Caenorhabditis elegans.